Reading from the N-terminus, the 101-residue chain is Enhancer of yellow 2 transcription factor (101 aa).

Belongs to the ENY2 family. Component of the nuclear pore complex (NPC)-associated AMEX complex (anchoring and mRNA export complex), composed of at least e(y)2 and xmas-2. Component of the SAGA transcription coactivator-HAT complexes, at least composed of Ada2b, e(y)2, Pcaf/Gcn5, Taf10 and Nipped-A/Trrap. Within the SAGA complex, e(y)2, Sgf11, and not/nonstop form an additional subcomplex of SAGA called the DUB module (deubiquitination module). Component of the THO complex, composed of at least e(y)2, HPR1, THO2, THOC5, THOC6 and THOC7. Interacts with e(y)1. Interacts with su(Hw) (via zinc fingers). Interacts with xmas-2; required for localization to the nuclear periphery. Interacts with the nuclear pore complex (NPC).

It localises to the nucleus. The protein localises to the nucleoplasm. It is found in the cytoplasm. Its function is as follows. Involved in mRNA export coupled transcription activation by association with both the AMEX and the SAGA complexes. The SAGA complex is a multiprotein complex that activates transcription by remodeling chromatin and mediating histone acetylation and deubiquitination. Within the SAGA complex, participates in a subcomplex that specifically deubiquitinates histone H2B. The SAGA complex is recruited to specific gene promoters by activators, where it is required for transcription. Required for nuclear receptor-mediated transactivation. Involved in transcription elongation by recruiting the THO complex onto nascent mRNA. The AMEX complex functions in docking export-competent ribonucleoprotein particles (mRNPs) to the nuclear entrance of the nuclear pore complex (nuclear basket). AMEX participates in mRNA export and accurate chromatin positioning in the nucleus by tethering genes to the nuclear periphery. In Drosophila sechellia (Fruit fly), this protein is Enhancer of yellow 2 transcription factor.